The following is a 485-amino-acid chain: Glutamyl-tRNA(Gln) amidotransferase subunit A (485 aa).

Residues Lys79 and Ser154 each act as charge relay system in the active site. The active-site Acyl-ester intermediate is the Ser178.

The protein belongs to the amidase family. GatA subfamily. As to quaternary structure, heterotrimer of A, B and C subunits.

The catalysed reaction is L-glutamyl-tRNA(Gln) + L-glutamine + ATP + H2O = L-glutaminyl-tRNA(Gln) + L-glutamate + ADP + phosphate + H(+). Functionally, allows the formation of correctly charged Gln-tRNA(Gln) through the transamidation of misacylated Glu-tRNA(Gln) in organisms which lack glutaminyl-tRNA synthetase. The reaction takes place in the presence of glutamine and ATP through an activated gamma-phospho-Glu-tRNA(Gln). The sequence is that of Glutamyl-tRNA(Gln) amidotransferase subunit A from Clostridium botulinum (strain Eklund 17B / Type B).